The following is a 284-amino-acid chain: TnP I resolvase (284 aa).

A Core-binding (CB) domain is found at 1–84; the sequence is MDVAKQFSSY…SLAKFNEFLI (84 aa). A Tyr recombinase domain is found at 107–282; the sequence is ASPTQIVELD…NQLQLKNKME (176 aa). Active-site residues include R145, K170, H234, R237, and H260. The active-site O-(3'-phospho-DNA)-tyrosine intermediate is the Y269.

The protein belongs to the 'phage' integrase family.

Functionally, resolvase catalyzes the resolution (a site-specific recombination) of the cointegrated replicon to yield the final transposition products. The sequence is that of TnP I resolvase (tnpI) from Bacillus thuringiensis.